The primary structure comprises 356 residues: Holliday junction branch migration complex subunit RuvB (356 aa).

The large ATPase domain (RuvB-L) stretch occupies residues 4–191 (TDKLATEQRI…FGIVARLEFY (188 aa)). Residues Leu30, Arg31, Gly72, Lys75, Thr76, Thr77, 138–140 (EDY), Arg181, Tyr191, and Arg228 contribute to the ATP site. Thr76 provides a ligand contact to Mg(2+). The segment at 192–262 (DAEQLSRIVR…VADAALAMLD (71 aa)) is small ATPAse domain (RuvB-S). Residues 265 to 356 (PVGFDLMDRK…RGEWDTPDGK (92 aa)) form a head domain (RuvB-H) region. The DNA site is built by Arg301, Arg320, and Arg325.

Belongs to the RuvB family. In terms of assembly, homohexamer. Forms an RuvA(8)-RuvB(12)-Holliday junction (HJ) complex. HJ DNA is sandwiched between 2 RuvA tetramers; dsDNA enters through RuvA and exits via RuvB. An RuvB hexamer assembles on each DNA strand where it exits the tetramer. Each RuvB hexamer is contacted by two RuvA subunits (via domain III) on 2 adjacent RuvB subunits; this complex drives branch migration. In the full resolvosome a probable DNA-RuvA(4)-RuvB(12)-RuvC(2) complex forms which resolves the HJ.

Its subcellular location is the cytoplasm. The catalysed reaction is ATP + H2O = ADP + phosphate + H(+). Its function is as follows. The RuvA-RuvB-RuvC complex processes Holliday junction (HJ) DNA during genetic recombination and DNA repair, while the RuvA-RuvB complex plays an important role in the rescue of blocked DNA replication forks via replication fork reversal (RFR). RuvA specifically binds to HJ cruciform DNA, conferring on it an open structure. The RuvB hexamer acts as an ATP-dependent pump, pulling dsDNA into and through the RuvAB complex. RuvB forms 2 homohexamers on either side of HJ DNA bound by 1 or 2 RuvA tetramers; 4 subunits per hexamer contact DNA at a time. Coordinated motions by a converter formed by DNA-disengaged RuvB subunits stimulates ATP hydrolysis and nucleotide exchange. Immobilization of the converter enables RuvB to convert the ATP-contained energy into a lever motion, pulling 2 nucleotides of DNA out of the RuvA tetramer per ATP hydrolyzed, thus driving DNA branch migration. The RuvB motors rotate together with the DNA substrate, which together with the progressing nucleotide cycle form the mechanistic basis for DNA recombination by continuous HJ branch migration. Branch migration allows RuvC to scan DNA until it finds its consensus sequence, where it cleaves and resolves cruciform DNA. This Burkholderia lata (strain ATCC 17760 / DSM 23089 / LMG 22485 / NCIMB 9086 / R18194 / 383) protein is Holliday junction branch migration complex subunit RuvB.